The chain runs to 104 residues: Large ribosomal subunit protein bL21 (104 aa).

Belongs to the bacterial ribosomal protein bL21 family. Part of the 50S ribosomal subunit. Contacts protein L20.

Functionally, this protein binds to 23S rRNA in the presence of protein L20. In Caldanaerobacter subterraneus subsp. tengcongensis (strain DSM 15242 / JCM 11007 / NBRC 100824 / MB4) (Thermoanaerobacter tengcongensis), this protein is Large ribosomal subunit protein bL21.